Reading from the N-terminus, the 122-residue chain is UPF0102 protein CPR_1677 (122 aa).

It belongs to the UPF0102 family.

This Clostridium perfringens (strain SM101 / Type A) protein is UPF0102 protein CPR_1677.